Reading from the N-terminus, the 425-residue chain is Serine--tRNA ligase (425 aa).

Residue 230 to 232 participates in L-serine binding; that stretch reads TAE. 261 to 263 lines the ATP pocket; it reads RSE. Glu-284 serves as a coordination point for L-serine. 348–351 contacts ATP; sequence EISS. Ser-384 is a binding site for L-serine.

Belongs to the class-II aminoacyl-tRNA synthetase family. Type-1 seryl-tRNA synthetase subfamily. As to quaternary structure, homodimer. The tRNA molecule binds across the dimer.

It is found in the cytoplasm. It catalyses the reaction tRNA(Ser) + L-serine + ATP = L-seryl-tRNA(Ser) + AMP + diphosphate + H(+). It carries out the reaction tRNA(Sec) + L-serine + ATP = L-seryl-tRNA(Sec) + AMP + diphosphate + H(+). It participates in aminoacyl-tRNA biosynthesis; selenocysteinyl-tRNA(Sec) biosynthesis; L-seryl-tRNA(Sec) from L-serine and tRNA(Sec): step 1/1. Functionally, catalyzes the attachment of serine to tRNA(Ser). Is also able to aminoacylate tRNA(Sec) with serine, to form the misacylated tRNA L-seryl-tRNA(Sec), which will be further converted into selenocysteinyl-tRNA(Sec). The protein is Serine--tRNA ligase of Streptococcus agalactiae serotype Ia (strain ATCC 27591 / A909 / CDC SS700).